A 262-amino-acid polypeptide reads, in one-letter code: MLLGVNIDHIATLREARKINEPDPLEAVFLAKRAGAFQITIHLREDRRHIHDYDVERIVESSFLPVNVECSTDKQIVDLLCELRPHRITLVPEKREEVTTEGGLDLLGRFEILKSRIAQFRENDIAVSLFVDPDITSIELSKELGADMVELHTGTFANLHLMLRSNLPKTPHAIPALEMDRRSLSLAYRESLLTLQKAAQKANTLGIEVAAGHGLNYQNVSEIVKIPEIIELNIGHSLIARSIFTGFEAAVREMVELLGRGD.

Position 6 (Asn6) interacts with 3-amino-2-oxopropyl phosphate. Residue 8-9 participates in 1-deoxy-D-xylulose 5-phosphate binding; it reads DH. Arg17 provides a ligand contact to 3-amino-2-oxopropyl phosphate. His42 acts as the Proton acceptor in catalysis. Arg44 and His49 together coordinate 1-deoxy-D-xylulose 5-phosphate. The Proton acceptor role is filled by Glu69. Thr99 provides a ligand contact to 1-deoxy-D-xylulose 5-phosphate. The Proton donor role is filled by His213. 3-amino-2-oxopropyl phosphate contacts are provided by residues Gly214 and 235–236; that span reads GH.

This sequence belongs to the PNP synthase family. In terms of assembly, homooctamer; tetramer of dimers.

It is found in the cytoplasm. The catalysed reaction is 3-amino-2-oxopropyl phosphate + 1-deoxy-D-xylulose 5-phosphate = pyridoxine 5'-phosphate + phosphate + 2 H2O + H(+). It participates in cofactor biosynthesis; pyridoxine 5'-phosphate biosynthesis; pyridoxine 5'-phosphate from D-erythrose 4-phosphate: step 5/5. In terms of biological role, catalyzes the complicated ring closure reaction between the two acyclic compounds 1-deoxy-D-xylulose-5-phosphate (DXP) and 3-amino-2-oxopropyl phosphate (1-amino-acetone-3-phosphate or AAP) to form pyridoxine 5'-phosphate (PNP) and inorganic phosphate. In Wolinella succinogenes (strain ATCC 29543 / DSM 1740 / CCUG 13145 / JCM 31913 / LMG 7466 / NCTC 11488 / FDC 602W) (Vibrio succinogenes), this protein is Pyridoxine 5'-phosphate synthase.